The chain runs to 359 residues: 4-galactosyl-N-acetylglucosaminide 3-alpha-L-fucosyltransferase 9 (359 aa).

Residues 1-11 lie on the Cytoplasmic side of the membrane; the sequence is MTSTSKGILRP. Residues 12-32 form a helical; Signal-anchor for type II membrane protein membrane-spanning segment; that stretch reads FLIVCVILACFMACLLIYIKP. Residues 33–359 are Lumenal-facing; it reads TNSWVFSPME…VGNLEKWFWN (327 aa). Asn62 is a glycosylation site (N-linked (GlcNAc...) asparagine). The tract at residues 63 to 168 is acceptor-binding; the sequence is ETTILVWVWP…RRDSDIQVPY (106 aa). Gln75 is an a beta-D-galactosyl-(1-&gt;4)-N-acetyl-beta-D-glucosaminyl derivative binding site. Intrachain disulfides connect Cys82–Cys335, Cys91–Cys338, and Cys190–Cys238. An N-linked (GlcNAc...) asparagine glycan is attached at Asn101. A beta-D-galactosyl-(1-&gt;4)-N-acetyl-beta-D-glucosaminyl derivative is bound at residue Glu137. The active-site Nucleophile is Glu137. Residue Glu137 coordinates GDP-beta-L-fucose. The N-linked (GlcNAc...) asparagine glycan is linked to Asn153. Tyr168, Val192, Ser194, Asn195, Arg202, Val226, Tyr241, Asn246, Tyr252, Glu255, and Lys256 together coordinate GDP-beta-L-fucose. The tract at residues 169–326 is donor-binding; sequence GFLTVSTNPF…NWRKDFTVNL (158 aa). The acceptor-binding stretch occupies residues 327–359; sequence PRFWESHACLACDHVKRHQEYKSVGNLEKWFWN.

It belongs to the glycosyltransferase 10 family. In terms of assembly, homodimer. N-glycosylated with complex-type N-glycans.

It is found in the golgi apparatus. It localises to the trans-Golgi network membrane. Its subcellular location is the golgi apparatus membrane. It carries out the reaction a beta-D-galactosyl-(1-&gt;4)-N-acetyl-beta-D-glucosaminyl derivative + GDP-beta-L-fucose = a beta-D-galactosyl-(1-&gt;4)-[alpha-L-fucosyl-(1-&gt;3)]-N-acetyl-beta-D-glucosaminyl derivative + GDP + H(+). The catalysed reaction is an alpha-Neu5Ac-(2-&gt;3)-beta-D-Gal-(1-&gt;4)-beta-D-GlcNAc-(1-&gt;3)-beta-D-Gal-(1-&gt;4)-beta-D-GlcNAc derivative + GDP-beta-L-fucose = an alpha-Neu5Ac-(2-&gt;3)-beta-D-Gal-(1-&gt;4)-beta-D-GlcNAc-(1-&gt;3)-beta-D-Gal-(1-&gt;4)-[alpha-L-Fuc-(1-&gt;3)]-beta-D-GlcNAc derivative + GDP + H(+). It catalyses the reaction alpha-N-glycoloylneuraminosyl-(2-&gt;3)-beta-D-galactosyl-(1-&gt;4)-N-acetyl-beta-D-glucosaminyl-(1-&gt;3)-beta-D-galactosyl-(1-&gt;4)-N-acetyl-beta-D-glucosaminyl-(1-&gt;3)-beta-D-galactosyl-(1-&gt;4)-beta-D-glucosyl-(1&lt;-&gt;1')-ceramide + GDP-beta-L-fucose = alpha-N-glycoloylneuraminosyl-(2-&gt;3)-beta-D-galactosyl-(1-&gt;4)-N-acetyl-beta-D-glucosaminyl-(1-&gt;3)-beta-D-galactosyl-(1-&gt;4)-[alpha-L-fucosyl-(1-&gt;3)]-N-acetyl-beta-D-glucosaminyl-(1-&gt;3)-beta-D-galactosyl-(1-&gt;4)-beta-D-glucosyl-(1&lt;-&gt;1')-ceramide + GDP + H(+). The enzyme catalyses alpha-D-galactosyl-(1-&gt;3)-beta-D-galactosyl-(1-&gt;4)-N-acetyl-beta-D-glucosaminyl-(1-&gt;3)-beta-D-galactosyl-(1-&gt;4)-beta-D-glucosyl-(1&lt;-&gt;1')-ceramide + GDP-beta-L-fucose = a neolactoside IV(3)-alpha-Gal,III(3)-alpha-Fuc-nLc4Cer + GDP + H(+). It carries out the reaction a neolactoside nLc4Cer + GDP-beta-L-fucose = a neolactoside III(3)-alpha-Fuc-nLc4Cer + GDP + H(+). The catalysed reaction is an N-acetyl-alpha-neuraminyl-(2-&gt;3)-beta-D-galactosyl-(1-&gt;4)-N-acetyl-beta-D-glucosaminyl derivative + GDP-beta-L-fucose = an alpha-Neu5Ac-(2-&gt;3)-beta-D-Gal-(1-&gt;4)-[alpha-L-Fuc-(1-&gt;3)]-beta-D-GlcNAc derivative + GDP + H(+). It catalyses the reaction beta-D-Gal-(1-&gt;4)-beta-D-GlcNAc-(1-&gt;3)-beta-D-Gal-(1-&gt;4)-D-Glc + GDP-beta-L-fucose = beta-D-Gal-(1-&gt;4)-[alpha-L-Fuc-(1-&gt;3)]-beta-D-GlcNAc-(1-&gt;3)-beta-D-Gal-(1-&gt;4)-D-Glc + GDP + H(+). The enzyme catalyses an alpha-L-Fuc-(1-&gt;2)-beta-D-Gal-(1-&gt;4)-beta-D-GlcNAc derivative + GDP-beta-L-fucose = an alpha-L-Fuc-(1-&gt;2)-beta-D-Gal-(1-&gt;4)-[alpha-L-Fuc-(1-&gt;3)]-beta-D-GlcNAc derivative + GDP + H(+). It functions in the pathway protein modification; protein glycosylation. Its pathway is glycolipid biosynthesis. With respect to regulation, activated by Mn2+. Functionally, catalyzes alpha(1-&gt;3) linkage of fucosyl moiety transferred from GDP-beta-L-fucose to N-acetyl glucosamine (GlcNAc) within type 2 lactosamine (LacNAc, beta-D-Gal-(1-&gt;4)-beta-D-GlcNAc-) glycan attached to glycolipids and N- or O-linked glycoproteins. Fucosylates distal type 2 LacNAc and its fucosylated (H-type 2 LacNAc) and sialylated (sialyl-type 2 LacNAc) derivatives to form Lewis x (Lex) (CD15) and Lewis y (Ley) antigenic epitopes involved in cell adhesion and differentiation. Generates Lex epitopes in the brain, presumably playing a role in the maintenance of neuronal stemness and neurite outgrowth in progenitor neural cells. Fucosylates the internal type 2 LacNAc unit of the polylactosamine chain to form VIM-2 antigen that serves as recognition epitope for SELE. Can also modify milk oligosaccharides in particular type 2 tetrasaccharide LNnT. This is 4-galactosyl-N-acetylglucosaminide 3-alpha-L-fucosyltransferase 9 from Cricetulus griseus (Chinese hamster).